We begin with the raw amino-acid sequence, 142 residues long: MLDIQQIQQIIPHRYPFLLVDRIVEVEEGKRAVGIKNVSANEQFFVGHFPEYPVMPGVLIVEALAQVGAVAMLMKEENRGRLAFFTGIDNCRFKKQVKPGDQLRLEVEMIRFKGAIGKGKGIATVDGELVCETEMMFALGEK.

His48 is a catalytic residue.

It belongs to the thioester dehydratase family. FabZ subfamily.

It is found in the cytoplasm. It catalyses the reaction a (3R)-hydroxyacyl-[ACP] = a (2E)-enoyl-[ACP] + H2O. Involved in unsaturated fatty acids biosynthesis. Catalyzes the dehydration of short chain beta-hydroxyacyl-ACPs and long chain saturated and unsaturated beta-hydroxyacyl-ACPs. The polypeptide is 3-hydroxyacyl-[acyl-carrier-protein] dehydratase FabZ (Anoxybacillus flavithermus (strain DSM 21510 / WK1)).